The primary structure comprises 540 residues: Chaperonin GroEL (540 aa).

ATP contacts are provided by residues 30-33 (TLGP), K51, 87-91 (DGTTT), G415, and D495.

This sequence belongs to the chaperonin (HSP60) family. As to quaternary structure, forms a cylinder of 14 subunits composed of two heptameric rings stacked back-to-back. Interacts with the co-chaperonin GroES.

It is found in the cytoplasm. It catalyses the reaction ATP + H2O + a folded polypeptide = ADP + phosphate + an unfolded polypeptide.. Together with its co-chaperonin GroES, plays an essential role in assisting protein folding. The GroEL-GroES system forms a nano-cage that allows encapsulation of the non-native substrate proteins and provides a physical environment optimized to promote and accelerate protein folding. The chain is Chaperonin GroEL from Serratia ficaria.